The chain runs to 379 residues: Alkanesulfonate monooxygenase (379 aa).

This sequence belongs to the SsuD family.

It catalyses the reaction an alkanesulfonate + FMNH2 + O2 = an aldehyde + FMN + sulfite + H2O + 2 H(+). In terms of biological role, catalyzes the desulfonation of aliphatic sulfonates. The polypeptide is Alkanesulfonate monooxygenase (Pseudomonas savastanoi pv. phaseolicola (strain 1448A / Race 6) (Pseudomonas syringae pv. phaseolicola (strain 1448A / Race 6))).